We begin with the raw amino-acid sequence, 680 residues long: Probable Xaa-Pro aminopeptidase P (680 aa).

Mn(2+) contacts are provided by D477, D488, E586, and E600.

This sequence belongs to the peptidase M24B family. Requires Mn(2+) as cofactor.

The enzyme catalyses Release of any N-terminal amino acid, including proline, that is linked to proline, even from a dipeptide or tripeptide.. In terms of biological role, catalyzes the removal of a penultimate prolyl residue from the N-termini of peptides. This chain is Probable Xaa-Pro aminopeptidase P (AMPP), found in Podospora anserina (strain S / ATCC MYA-4624 / DSM 980 / FGSC 10383) (Pleurage anserina).